The following is a 183-amino-acid chain: UPF0397 protein EF_2154 (183 aa).

5 helical membrane-spanning segments follow: residues 10–30 (IVAI…VVIP), 44–64 (FLAL…GLIG), 74–94 (GSAW…FGFA), 115–135 (IFQA…LDIL), and 147–167 (QGVF…TLLM).

It belongs to the UPF0397 family.

It is found in the cell membrane. In Enterococcus faecalis (strain ATCC 700802 / V583), this protein is UPF0397 protein EF_2154.